Here is an 88-residue protein sequence, read N- to C-terminus: Small ribosomal subunit protein bS20 (88 aa).

It belongs to the bacterial ribosomal protein bS20 family.

Functionally, binds directly to 16S ribosomal RNA. This Methylorubrum populi (strain ATCC BAA-705 / NCIMB 13946 / BJ001) (Methylobacterium populi) protein is Small ribosomal subunit protein bS20.